A 905-amino-acid chain; its full sequence is DNA gyrase subunit A (905 aa).

In terms of domain architecture, Topo IIA-type catalytic spans 35-524; that stretch reads IPDVRDGLKP…GEFDQDIEDL (490 aa). Tyr-123 serves as the catalytic O-(5'-phospho-DNA)-tyrosine intermediate. Positions 551-557 match the GyrA-box motif; it reads QKRGGKG.

It belongs to the type II topoisomerase GyrA/ParC subunit family. In terms of assembly, heterotetramer, composed of two GyrA and two GyrB chains. In the heterotetramer, GyrA contains the active site tyrosine that forms a transient covalent intermediate with DNA, while GyrB binds cofactors and catalyzes ATP hydrolysis.

The protein resides in the cytoplasm. It catalyses the reaction ATP-dependent breakage, passage and rejoining of double-stranded DNA.. Its function is as follows. A type II topoisomerase that negatively supercoils closed circular double-stranded (ds) DNA in an ATP-dependent manner to modulate DNA topology and maintain chromosomes in an underwound state. Negative supercoiling favors strand separation, and DNA replication, transcription, recombination and repair, all of which involve strand separation. Also able to catalyze the interconversion of other topological isomers of dsDNA rings, including catenanes and knotted rings. Type II topoisomerases break and join 2 DNA strands simultaneously in an ATP-dependent manner. The polypeptide is DNA gyrase subunit A (Rickettsia prowazekii (strain Madrid E)).